A 111-amino-acid chain; its full sequence is MATRRIVATEKSILEKDDHIGSSPAAGEKSNITPAVPLDVILKLLAFTLAMVVIPIGSYFVTVNSIFKGNSTYAGALAAIMANVVLVAYVVVAMNEDQTEQEKAKEGKKDR.

Residues 1–39 (MATRRIVATEKSILEKDDHIGSSPAAGEKSNITPAVPLD) lie on the Cytoplasmic side of the membrane. Residues 40–60 (VILKLLAFTLAMVVIPIGSYF) traverse the membrane as a helical segment. Over 61–73 (VTVNSIFKGNSTY) the chain is Lumenal. Residues 74-94 (AGALAAIMANVVLVAYVVVAM) traverse the membrane as a helical segment. Residues 95–111 (NEDQTEQEKAKEGKKDR) are Cytoplasmic-facing. A Prevents secretion from ER motif is present at residues 108-111 (KKDR).

This sequence belongs to the VMA21 family.

The protein localises to the endoplasmic reticulum membrane. It is found in the endoplasmic reticulum-Golgi intermediate compartment membrane. Its subcellular location is the cytoplasmic vesicle. It localises to the COPII-coated vesicle membrane. In terms of biological role, required for the assembly of the V0 complex of the vacuolar ATPase (V-ATPase) in the endoplasmic reticulum. The protein is Vacuolar ATPase assembly integral membrane protein VMA21 of Pyricularia oryzae (strain 70-15 / ATCC MYA-4617 / FGSC 8958) (Rice blast fungus).